We begin with the raw amino-acid sequence, 202 residues long: ATP-dependent Clp protease proteolytic subunit (202 aa).

The active-site Nucleophile is Ser-106. His-131 is a catalytic residue.

Belongs to the peptidase S14 family. Fourteen ClpP subunits assemble into 2 heptameric rings which stack back to back to give a disk-like structure with a central cavity, resembling the structure of eukaryotic proteasomes.

The protein resides in the cytoplasm. It catalyses the reaction Hydrolysis of proteins to small peptides in the presence of ATP and magnesium. alpha-casein is the usual test substrate. In the absence of ATP, only oligopeptides shorter than five residues are hydrolyzed (such as succinyl-Leu-Tyr-|-NHMec, and Leu-Tyr-Leu-|-Tyr-Trp, in which cleavage of the -Tyr-|-Leu- and -Tyr-|-Trp bonds also occurs).. Cleaves peptides in various proteins in a process that requires ATP hydrolysis. Has a chymotrypsin-like activity. Plays a major role in the degradation of misfolded proteins. This is ATP-dependent Clp protease proteolytic subunit from Shewanella sp. (strain MR-7).